We begin with the raw amino-acid sequence, 2179 residues long: METIKSIADMATGVTKTIDATINSVNEIITNTDNASGGDILTKVADDASNILGPNCYATTSEPENKDVVQATTTVNTTNLTQHPSAPTLPFTPDFSNVDTFHSMAYDTTTGSKNPNKLVRLTTHAWASTLQRGHQIDHVNLPVDFWDEQRKPAYGHAKYFAAVRCGFHFQVQVNVNQGTAGSALVVYEPKPVVDYDKDLEFGAFTNLPHVLMNLAETTQADLCIPYVADTNYVKTDSSDLGQLKVYVWTPLSIPSGSSNQVDVTILGSLLQLDFQNPRVYGQNVDIYDTAPSKPIPLRKTKYLTMSTKYKWTRNKVDIAEGPGSMNMANVLSTTAAQSVALVGERAFYDPRTAGSKSRFDDLVKISQLFSVMADSTTPSANHGIDQKGYFKWSANSDPQAIVHRNLVHLNLFPNLKVFENSYSYFRGSLIIRLSVYASTFNRGRLNGFFPNSSTDETSEIDNAIYTICDIGSDNSFEITIPYSFSTWMRKTHGKPIGLFQIEVLNRLTYNYSSPNEVYCIVQGKMGQDAKFFCPTGSLVTFQNSWGSQMDLTDPLCIEDSVEDCKQTITPTELGLTSAQDDGPLGNDKPNYFLNFKSMNVDIFTVSHTKVDNIFGRAWFAHVHDFTNDGLWRQGLEFPKEGHGALSLLFAYFTGELNIHVLFLSDRGFLRVGHTYDTETNRTNFLSSSGIITVPAGEQMTLSVPSYSNKPLRTVRSSNALGYLLCKPLLTGTSSGRIEIFLSLRCPNFFFPLPAPKPATRKYRGDLATWSDQSPYGRQGKKQLMKLAYLDRGFYKHYGIVVGDDVYQLDSDDIFKTALTGKAKFTKTRLTPDWVVEEECELDYFRIKYLESSVNSEHIFSVDNNCETIAKDIFGSHSLSQHQQIGLIGTILLTAGLMSTIKTPVNPTTIKEFFNHAIEGDEQGLSLLVQKCTTFFSSAATELLDNDLVKFIIKILVRILCYMVLYCHKPNILTTACLSTLLVMDVTSSSVLSPSCKALMQCLMDGDVKKLAEVVAESMSNTDDDEIKEQICDTVKYTKQILSNQGPFKGFNEISTAFRHIDWWIQTLLKIKDMVLSVFKPSVEKRAVEWLERNKEHVCSILDYASDIIVKSKDQTKMKTQEFYQRYNDCLSKFKPIMAMCFRSCHNSISNTVYRLFQELARIPNRMATQNDLIRVEPIGIWIQGEPGQGKSFLTHTLSKQLQKTCGLQGIYTNPTASEFMDGYDNQDIHLIDDLGQTRKERDIEMLCNCISSDPDIVPMAHLEEKGKFYTSKLVIATTNKPDFSSTVLLDSGALRRRFPYIMHIRAAKHYSKSGKLNVSQAMPHMSTGECWEVSKNGRDWETLKLKELIDKITVDYKERIANYNTWKKQLEDQTLDDLDDAVSYIKHNYPDAIPYIDEYLNIEMSTLIEQMEAFIEPKPSVFKCFASRVGDKIKEASREVVKWFSDKLKSMLNFVERNKAWLTVVSAVTSAIGILLLVTKIFKKEESKDERAYNPTLPVAKPKGTFPVSQREFKNEAPYDGQLEHIISQMAYITGSTTGHITHCAGYQHDEIILHGHSIKYLEQEEELTLHYKNKVFPIEQPSVTQVTLGGKPMDLAIVKCKLPFRFKKNSKYYTNKIGTESMLIWMTEQGIITKEVQRVHHSGGIKTREGTESTKTISYTVKSCKGMCGGLLISKVEGNFKILGMHIAGNGEMGVAIPFNFLKNDMSDQGIVTEVTPIQPMYINTKSQIHKSPVYGAVEVKMGPAVLSKSDTRLEEPVDCLVKKSASKYRVNKFQVNNELWQGVKACVKSKFREIFGVNGIVDMKTAILGTSHVNSMDLSTSAGYSFVKSGYKKKDLICLEPFSVSPMLEKLVQEKFHNLLKGNQITTIFNTCLKDELRKLDKIATGKTRCIEACEIDYCIVYRMIMMEIYDKIYQTPCYYSGLAVGINPYRDWHFMINALNDYNYEMDYSQYDGSLSSMLLWEAVQVLAYCHDSPDLVMQLHKPVIDSDHVVFNERWLIHGGMPSGSPCTTVLNSLCNLMMCIYTTNLISPGIDCLPIVYGDDVILSLDKEIEPERLQSIMAESFGAEVTGSRKDEPPSLKPRMEVEFLKRKPGYFPESTFIVGKLDTENMIQHLMWMKNFSTFKQQLQSYLMELCLHGKDTYQHYVKILNPYLKEWNIPVDDYEVVIGKLVPMVFD.

Positions 763-765 (RGD) match the Cell attachment site motif. Residues 786 to 881 (LAYLDRGFYK…IFGSHSLSQH (96 aa)) enclose the LRAT domain. Histidine 796 acts as the For protein 2A H-NC in catalysis. The active-site For protein 2A H-NC; Acyl-thioester intermediate is cysteine 865. One can recognise an SF3 helicase domain in the interval 1156–1317 (FQELARIPNR…KHYSKSGKLN (162 aa)). Residue 1184-1191 (GEPGQGKS) participates in ATP binding. Tyrosine 1493 carries the O-(5'-phospho-RNA)-tyrosine modification. In terms of domain architecture, Peptidase C3 spans 1517 to 1707 (APYDGQLEHI…IPFNFLKNDM (191 aa)). Active-site for protease 3C activity residues include histidine 1557, aspartate 1595, and cysteine 1669. Cysteine 1896 (acyl-thioester intermediate) is an active-site residue. Residues 1944–2058 (DYNYEMDYSQ…SLDKEIEPER (115 aa)) enclose the RdRp catalytic domain. Residues aspartate 1950 and aspartate 2044 each contribute to the Mg(2+) site.

The protein belongs to the picornaviruses polyprotein family. In terms of assembly, interacts with capsid protein VP1 and capsid protein VP3 to form heterotrimeric protomers. Five protomers subsequently associate to form pentamers which serve as building blocks for the capsid. Interacts with capsid protein VP0, and capsid protein VP3 to form heterotrimeric protomers. Five protomers subsequently associate to form pentamers which serve as building blocks for the capsid. As to quaternary structure, interacts with capsid protein VP0 and capsid protein VP1 to form heterotrimeric protomers. Five protomers subsequently associate to form pentamers which serve as building blocks for the capsid. In terms of assembly, homohexamer; forms a hexameric ring structure with 6-fold symmetry characteristic of AAA+ ATPases. Homodimer. Interacts with host ACBD3. As to quaternary structure, interacts with RNA-directed RNA polymerase. In terms of assembly, interacts with Viral protein genome-linked. It depends on Mg(2+) as a cofactor. VPg is uridylylated by the polymerase and is covalently linked to the 5'-end of genomic RNA. This uridylylated form acts as a nucleotide-peptide primer for the polymerase. In terms of processing, specific enzymatic cleavages yield mature proteins. All cleavages are catalyzed by P3C.

The protein localises to the virion. It localises to the host cytoplasm. The protein resides in the host nucleus. Its subcellular location is the host nucleolus. It is found in the host cytoplasmic vesicle membrane. The enzyme catalyses RNA(n) + a ribonucleoside 5'-triphosphate = RNA(n+1) + diphosphate. The catalysed reaction is a ribonucleoside 5'-triphosphate + H2O = a ribonucleoside 5'-diphosphate + phosphate + H(+). It catalyses the reaction Selective cleavage of Gln-|-Gly bond in the poliovirus polyprotein. In other picornavirus reactions Glu may be substituted for Gln, and Ser or Thr for Gly.. In terms of biological role, forms an icosahedral capsid of pseudo T=3 symmetry together with capsid proteins VP1 and VP3. The capsid is 300 Angstroms in diameter, composed of 60 copies of each capsid protein and enclosing the viral positive strand RNA genome. Capsid proteins interact with host alpha-V/beta-3 integrin heterodimer to provide virion attachment target cell. This attachment induces virion internalization predominantly through clathrin-mediated endocytosis. Binds packaging signals present in the viral RNA. Functionally, forms an icosahedral capsid of pseudo T=3 symmetry together with capsid proteins VP0 and VP1. The capsid is 300 Angstroms in diameter, composed of 60 copies of each capsid protein and enclosing the viral positive strand RNA genome. Capsid proteins interact with host alpha-V/beta-3 integrin heterodimer to provide virion attachment target cell. This attachment induces virion internalization predominantly through clathrin-mediated endocytosis. Binds packaging signals present in the viral RNA. Its function is as follows. Forms an icosahedral capsid of pseudo T=3 symmetry together with capsid proteins VP0 and VP3. The capsid is 300 Angstroms in diameter, composed of 60 copies of each capsid protein and enclosing the viral positive strand RNA genome. Capsid proteins interact with host alpha-V/beta-3 integrin heterodimer to provide virion attachment target cell. This attachment induces virion internalization predominantly through clathrin-mediated endocytosis. Binds packaging signals present in the viral RNA. Is not a protease. In terms of biological role, plays an essential role in the virus replication cycle by acting as a viroporin. Creates a pore in the host endoplasmic reticulum and as a consequence releases Ca2+ in the cytoplasm of infected cell. In turn, high levels of cytoplasmic calcium may trigger membrane trafficking and transport of viral ER-associated proteins to viroplasms, sites of viral genome replication. Functionally, induces and associates with structural rearrangements of intracellular membranes. Displays RNA-binding, nucleotide binding and NTPase activities. May play a role in virion morphogenesis and viral RNA encapsidation by interacting with the capsid protein VP3. Its function is as follows. Localizes the viral replication complex to the surface of membranous vesicles. It inhibits host cell endoplasmic reticulum-to-Golgi apparatus transport and causes the disassembly of the Golgi complex, possibly through GBF1 interaction. This would result in depletion of MHC, trail receptors and IFN receptors at the host cell surface. Plays an essential role in viral RNA replication by recruiting ACBD3 and PI4KB at the viral replication sites, thereby allowing the formation of the rearranged membranous structures where viral replication takes place. Acts as a primer for viral RNA replication and remains covalently bound to viral genomic RNA. VPg is uridylylated prior to priming replication into VPg-pUpU. The VPg-pUpU is then used as primer on the genomic RNA poly(A) by the RNA-dependent RNA polymerase to replicate the viral genome. Following genome release from the infecting virion in the cytoplasm, the VPg-RNA linkage is probably removed by host TDP2. During the late stage of the replication cycle, host TDP2 is excluded from sites of viral RNA synthesis and encapsidation, allowing for the generation of progeny virions. In terms of biological role, cysteine protease that generates mature viral proteins from the precursor polyprotein. In addition to its proteolytic activity, it binds to viral RNA, and thus influences viral genome replication. RNA and substrate bind cooperatively to the protease. Functionally, replicates the viral genomic RNA on the surface of intracellular membranes. Covalently attaches UMP to a tyrosine of VPg, which is used to prime RNA synthesis. The positive stranded RNA genome is first replicated at virus induced membranous vesicles, creating a dsRNA genomic replication form. This dsRNA is then used as template to synthesize positive stranded RNA genomes. ss(+)RNA genomes are either translated, replicated or encapsidated. The polypeptide is Genome polyprotein (Human parechovirus 2 (strain Williamson) (HPeV-2)).